The following is a 357-amino-acid chain: UDP-3-O-acylglucosamine N-acyltransferase (357 aa).

Histidine 258 (proton acceptor) is an active-site residue.

This sequence belongs to the transferase hexapeptide repeat family. LpxD subfamily. In terms of assembly, homotrimer.

The catalysed reaction is a UDP-3-O-[(3R)-3-hydroxyacyl]-alpha-D-glucosamine + a (3R)-hydroxyacyl-[ACP] = a UDP-2-N,3-O-bis[(3R)-3-hydroxyacyl]-alpha-D-glucosamine + holo-[ACP] + H(+). It participates in bacterial outer membrane biogenesis; LPS lipid A biosynthesis. Functionally, catalyzes the N-acylation of UDP-3-O-acylglucosamine using 3-hydroxyacyl-ACP as the acyl donor. Is involved in the biosynthesis of lipid A, a phosphorylated glycolipid that anchors the lipopolysaccharide to the outer membrane of the cell. The sequence is that of UDP-3-O-acylglucosamine N-acyltransferase from Azorhizobium caulinodans (strain ATCC 43989 / DSM 5975 / JCM 20966 / LMG 6465 / NBRC 14845 / NCIMB 13405 / ORS 571).